Here is an 87-residue protein sequence, read N- to C-terminus: Small ribosomal subunit protein bS16 (87 aa).

This sequence belongs to the bacterial ribosomal protein bS16 family.

In Fusobacterium nucleatum subsp. nucleatum (strain ATCC 25586 / DSM 15643 / BCRC 10681 / CIP 101130 / JCM 8532 / KCTC 2640 / LMG 13131 / VPI 4355), this protein is Small ribosomal subunit protein bS16.